The following is a 202-amino-acid chain: Response regulator RamR (202 aa).

The tract at residues 1 to 121 is response regulatory; it reads MGEMVRIAVV…LITAVHTVAR (121 aa). Positions 135-200 constitute an HTH luxR-type domain; sequence LKGAEMPLTT…DAIRIVQSAG (66 aa). Residues 159-178 constitute a DNA-binding region (H-T-H motif); sequence IAEIAARLHLSRGTVRNYMA.

In terms of assembly, homodimer, in the absence of phosphorylation. Post-translationally, may be phosphorylated by an unknown kinase, probably on Asp-56.

A transcription factor required for aerial hyphae formation on rich medium. Activates transcription of ramC. Might be part of a two-component regulatory system. Binds the promoter of ramC. Non-phosphorylated protein cooperatively binds multiple sites in the ramC promoter. Has not been seen to autophosphorylate using the small molecule phosphodonors phosphoramidate, acetyl phosphate or carbamoyl phosphate. Upon low expression suppresses the bald (bld, no aerial hyphae) phenotype of citA but not bldJ mutants; higher expression also suppresses the bldJ mutant as well as several other bld mutations, inducing SapB production even on media where SapB is normally not produced. Expression of the ram locus (ramA, ramB and ramR) induces rapid aerial mycelium formation in S.lividans. Overexpression suppresses the no aerial hyphae phenotype of a chaplin-negative strain, probably by inducing expression of SapB. Overexpression of RamR show there are about 280 genes having at least a threefold increase or fourfold decrease in RNA abundance versus wild-type including gene cluster SCO4072-SCO4075. The chain is Response regulator RamR from Streptomyces coelicolor (strain ATCC BAA-471 / A3(2) / M145).